The primary structure comprises 166 residues: Mitochondrial translation release factor in rescue (166 aa).

Residues 1–35 (MSTVGLFHFPTPLTRICPAPWGLRLWEKLTLLSPG) constitute a mitochondrion transit peptide. The tract at residues 57–121 (ENELEEQFVK…LQEKVDVFYN (65 aa)) is GGQ domain. Residues 71–73 (GGQ) carry the GGQ motif. Glutamine 73 carries the N5-methylglutamine modification. The tract at residues 122 to 148 (GENSPVHKEKREAAKKKQERKKRAKET) is disordered. Residues 126 to 137 (PVHKEKREAAKK) are compositionally biased toward basic and acidic residues. A coiled-coil region spans residues 127-160 (VHKEKREAAKKKQERKKRAKETLEKKKLLKELWE).

It belongs to the prokaryotic/mitochondrial release factor family. As to quaternary structure, interacts (via C-terminus) with MTRES1 (via S4 domain). Associates with mitoribosomal S39 large subunit, peptidyl tRNA and nascent chain. Methylation of glutamine in the GGQ triplet by HEMK1. Expressed in all areas of the brain tested.

It is found in the mitochondrion. Its function is as follows. Part of a mitoribosome-associated quality control pathway that prevents aberrant translation by responding to interruptions during elongation. As heterodimer with MTRES1, ejects the unfinished nascent chain and peptidyl transfer RNA (tRNA), respectively, from stalled ribosomes. Recruitment of mitoribosome biogenesis factors to these quality control intermediates suggests additional roles for MTRES1 and MTRF during mitoribosome rescue. The sequence is that of Mitochondrial translation release factor in rescue from Homo sapiens (Human).